The chain runs to 220 residues: Response regulator ArlR (220 aa).

The Response regulatory domain occupies Lys3 to Leu116. Asp52 is modified (4-aspartylphosphate). The segment at residues Lys122 to Gln220 is a DNA-binding region (ompR/PhoB-type).

In terms of processing, phosphorylated by ArlS.

Its subcellular location is the cytoplasm. Functionally, member of the two-component regulatory system ArlS/ArlR. The sequence is that of Response regulator ArlR (arlR) from Staphylococcus saprophyticus subsp. saprophyticus (strain ATCC 15305 / DSM 20229 / NCIMB 8711 / NCTC 7292 / S-41).